The primary structure comprises 49 residues: MAVPKRRVSKTRAAKRRSHYKIALAKPIKDKDGSWKMPHHINKFTGSYK.

It belongs to the bacterial ribosomal protein bL32 family.

This chain is Large ribosomal subunit protein bL32, found in Helicobacter hepaticus (strain ATCC 51449 / 3B1).